The primary structure comprises 243 residues: Anti-H(O) lectin 1 (243 aa).

N-linked (GlcNAc...) asparagine; partial glycosylation is present at Asn-10. The N-linked (GlcNAc...) asparagine glycan is linked to Asn-116. Residues Glu-126 and Asp-128 each contribute to the Mn(2+) site. Positions 128, 135, and 138 each coordinate Ca(2+). Residues Asp-138 and His-143 each coordinate Mn(2+).

It belongs to the leguminous lectin family.

Its function is as follows. L-fucose specific lectin. This Ulex europaeus (Furze) protein is Anti-H(O) lectin 1.